Consider the following 345-residue polypeptide: Aspartate-semialdehyde dehydrogenase (345 aa).

NADP(+) is bound by residues 11-14 (TGQV) and 39-40 (RS). Arg99 lines the phosphate pocket. The active-site Acyl-thioester intermediate is the Cys130. Gln157 lines the substrate pocket. 160-161 (SG) provides a ligand contact to NADP(+). Position 227 (Lys227) interacts with phosphate. Arg249 provides a ligand contact to substrate. Catalysis depends on His256, which acts as the Proton acceptor. Asn325 provides a ligand contact to NADP(+).

This sequence belongs to the aspartate-semialdehyde dehydrogenase family. In terms of assembly, homodimer.

It carries out the reaction L-aspartate 4-semialdehyde + phosphate + NADP(+) = 4-phospho-L-aspartate + NADPH + H(+). The protein operates within amino-acid biosynthesis; L-lysine biosynthesis via DAP pathway; (S)-tetrahydrodipicolinate from L-aspartate: step 2/4. It functions in the pathway amino-acid biosynthesis; L-methionine biosynthesis via de novo pathway; L-homoserine from L-aspartate: step 2/3. It participates in amino-acid biosynthesis; L-threonine biosynthesis; L-threonine from L-aspartate: step 2/5. Functionally, catalyzes the NADPH-dependent formation of L-aspartate-semialdehyde (L-ASA) by the reductive dephosphorylation of L-aspartyl-4-phosphate. The sequence is that of Aspartate-semialdehyde dehydrogenase from Mycobacterium bovis (strain ATCC BAA-935 / AF2122/97).